The following is a 473-amino-acid chain: Bifunctional protein GlmU (473 aa).

Residues 1-241 (MATQPTPLTA…VGSLVGINDR (241 aa)) are pyrophosphorylase. UDP-N-acetyl-alpha-D-glucosamine is bound by residues 13-16 (LAAG), K27, Q84, and 89-90 (GT). D114 is a binding site for Mg(2+). Residues G152, E167, N182, and N239 each contribute to the UDP-N-acetyl-alpha-D-glucosamine site. N239 serves as a coordination point for Mg(2+). A linker region spans residues 242–262 (AQLAAAEEVLYGRIADRLRKS). The segment at 263-473 (GVTIRTSARI…KARLKDAAKK (211 aa)) is N-acetyltransferase. Positions 343 and 361 each coordinate UDP-N-acetyl-alpha-D-glucosamine. H373 serves as the catalytic Proton acceptor. Residues Y376 and N387 each coordinate UDP-N-acetyl-alpha-D-glucosamine. Acetyl-CoA is bound by residues A390, 396–397 (NY), S415, T433, and R450.

The protein in the N-terminal section; belongs to the N-acetylglucosamine-1-phosphate uridyltransferase family. This sequence in the C-terminal section; belongs to the transferase hexapeptide repeat family. As to quaternary structure, homotrimer. The cofactor is Mg(2+).

Its subcellular location is the cytoplasm. The catalysed reaction is alpha-D-glucosamine 1-phosphate + acetyl-CoA = N-acetyl-alpha-D-glucosamine 1-phosphate + CoA + H(+). The enzyme catalyses N-acetyl-alpha-D-glucosamine 1-phosphate + UTP + H(+) = UDP-N-acetyl-alpha-D-glucosamine + diphosphate. Its pathway is nucleotide-sugar biosynthesis; UDP-N-acetyl-alpha-D-glucosamine biosynthesis; N-acetyl-alpha-D-glucosamine 1-phosphate from alpha-D-glucosamine 6-phosphate (route II): step 2/2. It functions in the pathway nucleotide-sugar biosynthesis; UDP-N-acetyl-alpha-D-glucosamine biosynthesis; UDP-N-acetyl-alpha-D-glucosamine from N-acetyl-alpha-D-glucosamine 1-phosphate: step 1/1. It participates in bacterial outer membrane biogenesis; LPS lipid A biosynthesis. Functionally, catalyzes the last two sequential reactions in the de novo biosynthetic pathway for UDP-N-acetylglucosamine (UDP-GlcNAc). The C-terminal domain catalyzes the transfer of acetyl group from acetyl coenzyme A to glucosamine-1-phosphate (GlcN-1-P) to produce N-acetylglucosamine-1-phosphate (GlcNAc-1-P), which is converted into UDP-GlcNAc by the transfer of uridine 5-monophosphate (from uridine 5-triphosphate), a reaction catalyzed by the N-terminal domain. This Sorangium cellulosum (strain So ce56) (Polyangium cellulosum (strain So ce56)) protein is Bifunctional protein GlmU.